The sequence spans 1009 residues: MSLAFKIFFPQTLRALSRKELCLFRKHHWRDVRQFSQWSETDLLHGHPLFLRRKPVLSFQGSHLRSRATYLVFLPGLHVGLCSGPCEMAEQRFCVDYAKRGTAGCKKCKEKIVKGVCRIGKVVPNPFSESGGDMKEWYHIKCMFEKLERARATTKKIEDLTELEGWEELEDNEKEQITQHIADLSSKAAGTPKKKAVVQAKLTTTGQVTSPVKGASFVTSTNPRKFSGFSAKPNNSGEAPSSPTPKRSLSSSKCDPRHKDCLLREFRKLCAMVADNPSYNTKTQIIQDFLRKGSAGDGFHGDVYLTVKLLLPGVIKTVYNLNDKQIVKLFSRIFNCNPDDMARDLEQGDVSETIRVFFEQSKSFPPAAKSLLTIQEVDEFLLRLSKLTKEDEQQQALQDIASRCTANDLKCIIRLIKHDLKMNSGAKHVLDALDPNAYEAFKASRNLQDVVERVLHNAQEVEKEPGQRRALSVQASLMTPVQPMLAEACKSVEYAMKKCPNGMFSEIKYDGERVQVHKNGDHFSYFSRSLKPVLPHKVAHFKDYIPQAFPGGHSMILDSEVLLIDNKTGKPLPFGTLGVHKKAAFQDANVCLFVFDCIYFNDVSLMDRPLCERRKFLHDNMVEIPNRIMFSEMKRVTKALDLADMITRVIQEGLEGLVLKDVKGTYEPGKRHWLKVKKDYLNEGAMADTADLVVLGAFYGQGSKGGMMSIFLMGCYDPGSQKWCTVTKCAGGHDDATLARLQNELDMVKISKDPSKIPSWLKVNKIYYPDFIVPDPKKAAVWEITGAEFSKSEAHTADGISIRFPRCTRIRDDKDWKSATNLPQLKELYQLSKEKADFTVVAGDEGSSTTGGSSEENKGPSGSAVSRKAPSKPSASTKKAEGKLSNSNSKDGNMQTAKPSAMKVGEKLATKSSPVKVGEKRKAADETLCQTKVLLDIFTGVRLYLPPSTPDFSRLRRYFVAFDGDLVQEFDMTSATHVLGSRDKNPAAQQVSPEWIWACIRKRRLVAPC.

The transit peptide at methionine 1–aspartate 42 directs the protein to the mitochondrion. A PARP-type zinc finger spans residues phenylalanine 93 to serine 185. Residues cysteine 105, cysteine 108, histidine 139, and cysteine 142 each contribute to the Zn(2+) site. 4 positions are modified to phosphoserine: serine 210, serine 216, serine 227, and serine 242. A disordered region spans residues arginine 224–proline 256. The span at proline 240–serine 252 shows a compositional bias: low complexity. Interaction with DNA stretches follow at residues proline 277–asparagine 280, valine 318–aspartate 323, threonine 388–aspartate 391, and lysine 421–lysine 427. Residue glutamate 506 participates in ATP binding. Lysine 508 serves as the catalytic N6-AMP-lysine intermediate. Residues arginine 513 and arginine 528 each coordinate ATP. Mg(2+)-binding residues include glutamate 560 and glutamate 655. 3 residues coordinate ATP: lysine 660, arginine 671, and lysine 675. Residues alanine 842–valine 917 form a disordered region. 2 stretches are compositionally biased toward low complexity: residues glutamate 845 to serine 854 and serine 863 to threonine 877. Polar residues predominate over residues leucine 884–lysine 898. A Phosphoserine modification is found at serine 913. The region spanning valine 933–cysteine 1009 is the BRCT domain.

It belongs to the ATP-dependent DNA ligase family. As to quaternary structure, isoform 3 interacts (via BRCT domain) with the nuclear DNA-repair protein XRCC1. Interacts with POLG. Interacts with POLB. Mg(2+) serves as cofactor. Testis, thymus, prostate and heart.

It localises to the mitochondrion. The protein resides in the nucleus. The enzyme catalyses ATP + (deoxyribonucleotide)n-3'-hydroxyl + 5'-phospho-(deoxyribonucleotide)m = (deoxyribonucleotide)n+m + AMP + diphosphate.. Its function is as follows. Isoform 3 functions as a heterodimer with DNA-repair protein XRCC1 in the nucleus and can correct defective DNA strand-break repair and sister chromatid exchange following treatment with ionizing radiation and alkylating agents. Isoform 1 is targeted to mitochondria, where it functions as a DNA ligase in mitochondrial base-excision DNA repair. In Homo sapiens (Human), this protein is DNA ligase 3 (LIG3).